The primary structure comprises 394 residues: Phosphoglycerate kinase (394 aa).

Residues 21–23 (DFN), R36, 59–62 (HLGR), R118, and R151 contribute to the substrate site. The residue at position 183 (S183) is a Phosphoserine. K201 serves as a coordination point for ATP. T299 carries the post-translational modification Phosphothreonine. ATP-binding positions include E323 and 350 to 353 (GGDS).

The protein belongs to the phosphoglycerate kinase family. As to quaternary structure, monomer.

It localises to the cytoplasm. It carries out the reaction (2R)-3-phosphoglycerate + ATP = (2R)-3-phospho-glyceroyl phosphate + ADP. Its pathway is carbohydrate degradation; glycolysis; pyruvate from D-glyceraldehyde 3-phosphate: step 2/5. The sequence is that of Phosphoglycerate kinase from Geobacillus kaustophilus (strain HTA426).